A 228-amino-acid polypeptide reads, in one-letter code: Odorant-binding protein 47 (228 aa).

Cystine bridges form between Cys60–Cys225, Cys73–Cys215, Cys74–Cys204, Cys88–Cys114, Cys110–Cys185, and Cys158–Cys195. A glycan (N-linked (GlcNAc...) asparagine) is linked at Asn117.

This sequence belongs to the PBP/GOBP family. In terms of processing, glycosylated. In terms of tissue distribution, head without antennae (at protein level).

Its subcellular location is the secreted. Present in the aqueous fluid surrounding olfactory sensory dendrites and are thought to aid in the capture and transport of hydrophobic odorants into and through this fluid. Binds N-phenyl-1-naphthylamine, menthol, citronellal, 1-dodecanol, decanal, p-tert-butylbenzophenone, 4-hydroxy-4'-isopropylazobenzene, 2-pyrrolyl-p-methyl-azobenzene and indole. Expressed in mosquito head but barely detectable in antennae, which suggests that it may be present in mouth structures, such as palpi and proboscis, and may have a function in taste. The polypeptide is Odorant-binding protein 47 (Anopheles gambiae (African malaria mosquito)).